The chain runs to 419 residues: GTPase Obg (419 aa).

The 158-residue stretch at 1–158 (MIFIDTAEII…RRLRLELKLV (158 aa)) folds into the Obg domain. One can recognise an OBG-type G domain in the interval 159-328 (AHVGLVGLPN…LVDVLFELIS (170 aa)). GTP-binding positions include 165 to 172 (GLPNAGKS), 190 to 194 (FTTRS), 211 to 214 (DVPG), 281 to 284 (NKID), and 309 to 311 (SAA). Mg(2+) is bound by residues Ser-172 and Thr-192. One can recognise an OCT domain in the interval 344-419 (ELPPLPEDFS…VIHDKAFEIL (76 aa)).

The protein belongs to the TRAFAC class OBG-HflX-like GTPase superfamily. OBG GTPase family. In terms of assembly, monomer. The cofactor is Mg(2+).

The protein resides in the cytoplasm. Its function is as follows. An essential GTPase which binds GTP, GDP and possibly (p)ppGpp with moderate affinity, with high nucleotide exchange rates and a fairly low GTP hydrolysis rate. Plays a role in control of the cell cycle, stress response, ribosome biogenesis and in those bacteria that undergo differentiation, in morphogenesis control. In Coprothermobacter proteolyticus (strain ATCC 35245 / DSM 5265 / OCM 4 / BT), this protein is GTPase Obg.